Reading from the N-terminus, the 580-residue chain is Conglutin beta 3 (580 aa).

An N-terminal signal peptide occupies residues Met-1–Gly-30. Basic and acidic residues-rich tracts occupy residues Asn-37–Glu-72 and Arg-79–Glu-92. Residues Asn-37–Tyr-165 form a disordered region. Low complexity predominate over residues Gln-124–Gln-133. A compositionally biased stretch (basic and acidic residues) spans Ser-134 to Arg-145. Cupin type-1 domains lie at Tyr-164–Gln-322 and Phe-381–Glu-538. Residues Asn-229 and Asn-488 are each glycosylated (N-linked (GlcNAc...) asparagine). The interval Phe-549–Arg-569 is disordered.

This sequence belongs to the 7S seed storage protein family. As to quaternary structure, component of globulins complexes which accumulate in seeds.

Functionally, seed storage protein. Accumulates during seed development and is hydrolyzed after germination to provide a carbon and nitrogen source for the developing seedling. The chain is Conglutin beta 3 from Lupinus angustifolius (Narrow-leaved blue lupine).